Here is a 372-residue protein sequence, read N- to C-terminus: tRNA-specific 2-thiouridylase MnmA (372 aa).

ATP is bound by residues 16–23 (GMSGGVDS) and methionine 42. The segment at 102 to 104 (NPD) is interaction with target base in tRNA. Cysteine 107 (nucleophile) is an active-site residue. The cysteines at positions 107 and 205 are disulfide-linked. Residue glycine 132 participates in ATP binding. Residues 155–157 (KDQ) are interaction with tRNA. Cysteine 205 functions as the Cysteine persulfide intermediate in the catalytic mechanism. Positions 317 to 318 (RY) are interaction with tRNA.

It belongs to the MnmA/TRMU family.

The protein resides in the cytoplasm. The catalysed reaction is S-sulfanyl-L-cysteinyl-[protein] + uridine(34) in tRNA + AH2 + ATP = 2-thiouridine(34) in tRNA + L-cysteinyl-[protein] + A + AMP + diphosphate + H(+). Its function is as follows. Catalyzes the 2-thiolation of uridine at the wobble position (U34) of tRNA, leading to the formation of s(2)U34. The chain is tRNA-specific 2-thiouridylase MnmA from Shewanella sp. (strain W3-18-1).